Here is a 405-residue protein sequence, read N- to C-terminus: L-rhamnonate dehydratase (405 aa).

Positions 33 and 59 each coordinate substrate. Mg(2+)-binding residues include D226, E252, and E280. H329 acts as the Proton acceptor in catalysis. E349 provides a ligand contact to substrate.

The protein belongs to the mandelate racemase/muconate lactonizing enzyme family. RhamD subfamily. As to quaternary structure, homooctamer; tetramer of dimers. It depends on Mg(2+) as a cofactor.

It catalyses the reaction L-rhamnonate = 2-dehydro-3-deoxy-L-rhamnonate + H2O. In terms of biological role, catalyzes the dehydration of L-rhamnonate to 2-keto-3-deoxy-L-rhamnonate (KDR). This chain is L-rhamnonate dehydratase, found in Escherichia coli (strain K12 / DH10B).